Here is a 978-residue protein sequence, read N- to C-terminus: MTPAPAAASYRALVALLLVAVAVADDGSTLLEIKKSFRNVDNVLYDWAGGDYCSWRGVLCDNVTFAVAALNLSGLNLGGEISPAVGRLKGIVSIDLKSNGLSGQIPDEIGDCSSLKTLDLSFNSLDGDIPFSVSKLKHIESLILKNNQLIGVIPSTLSQLPNLKILDLAQNKLSGEIPRLIYWNEVLQYLGLRGNNLEGSISPDICQLTGLWYFDVKNNSLTGPIPETIGNCTSFQVLDLSYNKLSGSIPFNIGFLQVATLSLQGNMFTGPIPSVIGLMQALAVLDLSYNQLSGPIPSILGNLTYTEKLYMQGNKLTGPIPPELGNMSTLHYLELNDNQLSGFIPPEFGKLTGLFDLNLANNNFEGPIPDNISSCVNLNSFNAYGNRLNGTIPPSLHKLESMTYLNLSSNFLSGSIPIELSRINNLDTLDLSCNMITGPIPSTIGSLEHLLRLNLSNNGLVGFIPAEIGNLRSIMEIDMSNNHLGGLIPQELGMLQNLMLLNLKNNNITGDVSSLMNCFSLNILNVSYNNLAGVVPTDNNFSRFSPDSFLGNPGLCGYWLGSSCRSSGHQQKPLISKAAILGIAVGGLVILLMILVAVCRPHSPPVFKDVSVSKPVSNVPPKLVILHMNLSLLVYEDIMTMTENLSEKYIIGYGASSTVYKCVSKNRKPVAVKKLYAHYPQSFKEFETELETVGSIKHRNLVSLQGYSLSPVGNLLFYDYMENGSLWDVLHEGPTKKKKLDWETRLRIALGAAQGLAYLHHDCSPRIIHRDVKSKNILLDKDYEAHLTDFGIAKSLCVSKTHTSTYVMGTIGYIDPEYARTSRLNEKSDVYSYGIVLLELLTGKKPVDNECNLHHLILSKTANNAVMETVDPDIADTCKDLGEVKKVFQLALLCTKRQPSDRPTMHEVVRVLDCLVRPDPPPKSAQQLAMPQRPAVPSYINEYVSLRGTSVLSCANSSCTSDAELFLKFGEVISQNTE.

The signal sequence occupies residues 1–24; the sequence is MTPAPAAASYRALVALLLVAVAVA. Residues 25–577 are Extracellular-facing; sequence DDGSTLLEIK…GHQQKPLISK (553 aa). Asn-62 and Asn-71 each carry an N-linked (GlcNAc...) asparagine glycan. LRR repeat units follow at residues 66–87, 88–112, 114–136, 137–159, 160–184, 186–208, 209–232, 233–257, 259–278, 279–302, 304–327, 328–350, 352–375, 377–399, 400–423, 424–447, 449–470, 471–494, 496–518, and 519–543; these read AVAALNLSGLNLGGEISPAVGR, LKGIVSIDLKSNGLSGQIPDEIGDC, SLKTLDLSFNSLDGDIPFSVSKL, KHIESLILKNNQLIGVIPSTLSQ, LPNLKILDLAQNKLSGEIPRLIYWN, VLQYLGLRGNNLEGSISPDICQL, TGLWYFDVKNNSLTGPIPETIGNC, TSFQVLDLSYNKLSGSIPFNIGFLQ, ATLSLQGNMFTGPIPSVIGL, MQALAVLDLSYNQLSGPIPSILGN, TYTEKLYMQGNKLTGPIPPELGNM, STLHYLELNDNQLSGFIPPEFGK, TGLFDLNLANNNFEGPIPDNISSC, NLNSFNAYGNRLNGTIPPSLHKL, ESMTYLNLSSNFLSGSIPIELSRI, NNLDTLDLSCNMITGPIPSTIGSL, HLLRLNLSNNGLVGFIPAEIGN, LRSIMEIDMSNNHLGGLIPQELGM, QNLMLLNLKNNNITGDVSSLMNC, and FSLNILNVSYNNLAGVVPTDNNFSR. Residues Asn-218 and Asn-231 are each glycosylated (N-linked (GlcNAc...) asparagine). 2 N-linked (GlcNAc...) asparagine glycosylation sites follow: Asn-302 and Asn-326. Residues Asn-371, Asn-389, and Asn-406 are each glycosylated (N-linked (GlcNAc...) asparagine). A glycan (N-linked (GlcNAc...) asparagine) is linked at Asn-454. 3 N-linked (GlcNAc...) asparagine glycosylation sites follow: Asn-507, Asn-525, and Asn-540. A helical transmembrane segment spans residues 578 to 598; it reads AAILGIAVGGLVILLMILVAV. Residues 599–978 are Cytoplasmic-facing; it reads CRPHSPPVFK…FGEVISQNTE (380 aa). In terms of domain architecture, Protein kinase spans 645–916; that stretch reads LSEKYIIGYG…EVVRVLDCLV (272 aa). ATP-binding positions include 651-659 and Lys-673; that span reads IGYGASSTV. The active-site Proton acceptor is the Asp-771.

It belongs to the protein kinase superfamily. Ser/Thr protein kinase family.

The protein resides in the cell membrane. It catalyses the reaction L-seryl-[protein] + ATP = O-phospho-L-seryl-[protein] + ADP + H(+). It carries out the reaction L-threonyl-[protein] + ATP = O-phospho-L-threonyl-[protein] + ADP + H(+). In terms of biological role, receptor kinase involved in the regulation of thermotolerance. Functions as a positive regulator of heat tolerance. May be involved in the regulation of cell proliferation and cell growth. The polypeptide is LRR receptor-like serine/threonine-protein kinase ER1 (Oryza sativa subsp. japonica (Rice)).